Consider the following 379-residue polypeptide: 1-deoxy-D-xylulose 5-phosphate reductoisomerase (379 aa).

5 residues coordinate NADPH: Thr-10, Gly-11, Ser-12, Val-13, and Asn-121. Position 122 (Lys-122) interacts with 1-deoxy-D-xylulose 5-phosphate. Glu-123 lines the NADPH pocket. Asp-147 provides a ligand contact to Mn(2+). Ser-148, Glu-149, Ser-173, and His-196 together coordinate 1-deoxy-D-xylulose 5-phosphate. Mn(2+) is bound at residue Glu-149. Position 202 (Gly-202) interacts with NADPH. 1-deoxy-D-xylulose 5-phosphate-binding residues include Ser-209, Asn-214, Lys-215, and Glu-218. Glu-218 serves as a coordination point for Mn(2+).

The protein belongs to the DXR family. The cofactor is Mg(2+). Mn(2+) serves as cofactor.

It carries out the reaction 2-C-methyl-D-erythritol 4-phosphate + NADP(+) = 1-deoxy-D-xylulose 5-phosphate + NADPH + H(+). The protein operates within isoprenoid biosynthesis; isopentenyl diphosphate biosynthesis via DXP pathway; isopentenyl diphosphate from 1-deoxy-D-xylulose 5-phosphate: step 1/6. Catalyzes the NADPH-dependent rearrangement and reduction of 1-deoxy-D-xylulose-5-phosphate (DXP) to 2-C-methyl-D-erythritol 4-phosphate (MEP). The chain is 1-deoxy-D-xylulose 5-phosphate reductoisomerase from Chlamydia abortus (strain DSM 27085 / S26/3) (Chlamydophila abortus).